A 1126-amino-acid chain; its full sequence is Stress response protein nst1 (1126 aa).

A compositionally biased stretch (low complexity) spans 1 to 17 (MSTAAPAASATNSAIPA). Disordered stretches follow at residues 1 to 192 (MSTA…STQE), 266 to 348 (NQGS…ARAA), 404 to 453 (AAHQ…EQRM), 492 to 774 (LLEE…NGLP), 823 to 914 (NGAR…AQRD), 939 to 965 (LSQS…GPSL), and 1075 to 1126 (FEPD…PMGF). Over residues 35 to 45 (NRKKQKRRQKQ) the composition is skewed to basic residues. The segment covering 96–111 (ANHKDDQDSVDAHDDY) has biased composition (basic and acidic residues). The span at 125–136 (TGRKSKKKKGKK) shows a compositional bias: basic residues. Residues 291 to 300 (GQHTRTQGQF) show a composition bias toward polar residues. Acidic residues-rich tracts occupy residues 311 to 344 (PEEE…EDDE) and 419 to 448 (DEED…DTMT). A coiled-coil region spans residues 479–655 (KVAEQRQQKL…KREYQAKRTS (177 aa)). Composition is skewed to basic and acidic residues over residues 492–512 (LLEE…EAQK) and 522–651 (QAKE…EYQA). Composition is skewed to polar residues over residues 655 to 670 (SPFS…SSPV) and 694 to 721 (QPSQ…SVSP). The span at 727–737 (SQSSGASSVAS) shows a compositional bias: low complexity. Polar residues-rich tracts occupy residues 846 to 860 (GQQQ…QQSG) and 867 to 885 (RQPS…TQPM). Low complexity predominate over residues 886 to 898 (PISRPSPIKRPSS). Over residues 902–914 (DQRKNGDRTAQRD) the composition is skewed to basic and acidic residues. A compositionally biased stretch (polar residues) spans 1115-1126 (VLRQFSSPPMGF).

It belongs to the NST1 family.

Its subcellular location is the cytoplasm. In terms of biological role, may act as a negative regulator of salt tolerance. This chain is Stress response protein nst1 (nst1), found in Aspergillus clavatus (strain ATCC 1007 / CBS 513.65 / DSM 816 / NCTC 3887 / NRRL 1 / QM 1276 / 107).